The sequence spans 873 residues: Leucine--tRNA ligase (873 aa).

The 'HIGH' region motif lies at Pro-42–His-52. The tract at residues Pro-624–Pro-643 is disordered. The short motif at Lys-632–Ser-636 is the 'KMSKS' region element. Position 635 (Lys-635) interacts with ATP.

It belongs to the class-I aminoacyl-tRNA synthetase family.

It is found in the cytoplasm. It catalyses the reaction tRNA(Leu) + L-leucine + ATP = L-leucyl-tRNA(Leu) + AMP + diphosphate. The sequence is that of Leucine--tRNA ligase from Pseudomonas aeruginosa (strain ATCC 15692 / DSM 22644 / CIP 104116 / JCM 14847 / LMG 12228 / 1C / PRS 101 / PAO1).